Consider the following 917-residue polypeptide: Auxin response factor 17 (917 aa).

The segment at residues 134–236 is a DNA-binding region (TF-B3); the sequence is FCKTLTASDT…QLLLGIRRAN (103 aa). The tract at residues 571–649 is disordered; the sequence is SVPNALSPFS…RPTAVPVPDP (79 aa). Composition is skewed to low complexity over residues 576-594 and 604-620; these read LSPFSQLSSPSQSSPMTLQ and SYPDTSMSSLSPSNTST. Residues 786–870 enclose the PB1 domain; the sequence is ATFVKVYKSG…SCIKILSPQE (85 aa).

This sequence belongs to the ARF family. In terms of assembly, homodimers and heterodimers. In terms of tissue distribution, expressed in roots, culms, leaves and young panicles.

It is found in the nucleus. Its function is as follows. Auxin response factors (ARFs) are transcriptional factors that bind specifically to the DNA sequence 5'-TGTCTC-3' found in the auxin-responsive promoter elements (AuxREs). In Oryza sativa subsp. japonica (Rice), this protein is Auxin response factor 17 (ARF17).